The chain runs to 413 residues: Glucose-1-phosphate adenylyltransferase (413 aa).

Residues Gly163, 179 to 180 (EK), and Ser197 contribute to the alpha-D-glucose 1-phosphate site.

Belongs to the bacterial/plant glucose-1-phosphate adenylyltransferase family. In terms of assembly, homotetramer.

The catalysed reaction is alpha-D-glucose 1-phosphate + ATP + H(+) = ADP-alpha-D-glucose + diphosphate. Its pathway is glycan biosynthesis; glycogen biosynthesis. Involved in the biosynthesis of ADP-glucose, a building block required for the elongation reactions to produce glycogen. Catalyzes the reaction between ATP and alpha-D-glucose 1-phosphate (G1P) to produce pyrophosphate and ADP-Glc. In Parafrankia sp. (strain EAN1pec), this protein is Glucose-1-phosphate adenylyltransferase.